The following is a 358-amino-acid chain: Phospho-N-acetylmuramoyl-pentapeptide-transferase (358 aa).

10 helical membrane passes run 24–44 (FRSI…GPWV), 73–93 (TMGG…WADL), 95–115 (NVFI…GFVD), 134–154 (MFWQ…LPGF), 169–189 (ELGI…SNAV), 197–217 (GLAI…CYIA), 233–253 (GAGE…GFLW), 261–281 (VFMG…LAVL), 286–306 (ILLV…IFQV), and 335–355 (KIIV…ISTL).

It belongs to the glycosyltransferase 4 family. MraY subfamily. The cofactor is Mg(2+).

The protein resides in the cell inner membrane. The catalysed reaction is UDP-N-acetyl-alpha-D-muramoyl-L-alanyl-gamma-D-glutamyl-meso-2,6-diaminopimeloyl-D-alanyl-D-alanine + di-trans,octa-cis-undecaprenyl phosphate = di-trans,octa-cis-undecaprenyl diphospho-N-acetyl-alpha-D-muramoyl-L-alanyl-D-glutamyl-meso-2,6-diaminopimeloyl-D-alanyl-D-alanine + UMP. It functions in the pathway cell wall biogenesis; peptidoglycan biosynthesis. Catalyzes the initial step of the lipid cycle reactions in the biosynthesis of the cell wall peptidoglycan: transfers peptidoglycan precursor phospho-MurNAc-pentapeptide from UDP-MurNAc-pentapeptide onto the lipid carrier undecaprenyl phosphate, yielding undecaprenyl-pyrophosphoryl-MurNAc-pentapeptide, known as lipid I. The protein is Phospho-N-acetylmuramoyl-pentapeptide-transferase of Geobacter sp. (strain M21).